The sequence spans 160 residues: Eukaryotic translation initiation factor 5A-4 (160 aa).

A compositionally biased stretch (basic and acidic residues) spans 1–12; the sequence is MSDEEHHFESKA. The interval 1-21 is disordered; that stretch reads MSDEEHHFESKADAGASKTYP. K52 bears the Hypusine mark.

Belongs to the eIF-5A family. Post-translationally, lys-52 undergoes hypusination, a unique post-translational modification that consists in the addition of a butylamino group from spermidine to lysine side chain, leading to the formation of the unusual amino acid hypusine. eIF-5As are the only known proteins to undergo this modification, which is essential for their function.

Translation factor that promotes translation elongation and termination, particularly upon ribosome stalling at specific amino acid sequence contexts. Binds between the exit (E) and peptidyl (P) site of the ribosome and promotes rescue of stalled ribosome: specifically required for efficient translation of polyproline-containing peptides as well as other motifs that stall the ribosome. Acts as a ribosome quality control (RQC) cofactor by joining the RQC complex to facilitate peptidyl transfer during CAT tailing step. The polypeptide is Eukaryotic translation initiation factor 5A-4 (Solanum lycopersicum (Tomato)).